The following is a 222-amino-acid chain: Small ribosomal subunit protein eS8z (222 aa).

2 disordered regions span residues Met1 to Lys37 and Lys125 to Pro147. A compositionally biased stretch (basic residues) spans Ile8–Lys26.

It belongs to the eukaryotic ribosomal protein eS8 family.

The chain is Small ribosomal subunit protein eS8z (RPS8A) from Arabidopsis thaliana (Mouse-ear cress).